Reading from the N-terminus, the 247-residue chain is Protein eak-4 (247 aa).

Gly-2 is lipidated: N-myristoyl glycine.

Expressed in the 2 embryonic head hypodermal cells XXXL/R.

It is found in the cell membrane. In terms of biological role, together with eak-6 and sdf-9, negatively regulates dauer larva formation downstream of the insulin-like receptor daf-2 and in parallel with age-1, pdk-1 and akt-1. The polypeptide is Protein eak-4 (Caenorhabditis elegans).